A 768-amino-acid polypeptide reads, in one-letter code: MDRSRVLEQLIPELTGLLSLLDHEYLSDSTLEKKMAVASLLQSLQPLPAKEVSFLYVNTADLHSGPSFVESLFEEFDCDLGDLRDMSDDGEPSKGASPEPTKSPSLRSAAADVPPPLPNKPPPEDYYEEALPLGPGKSPEYISSHNGCSPAQSIVDGYYEDADNSYPTTRMNGELKNSYNDSDAMSSSYESYDEEEEEEKGRQPKHQWPSEEASMHLVRDCRICAFLLRKKRFGQWAKQLTVIKEEQLLCYKSSKDRQPHLRLALDVCTVIYVPKDSRHKRHELRFSQGATEVLVLALQSREQAEEWLKVIREVSRPIVGAEGLEVPRSPVILCKADQDKRLSQEKQNSDSDSLGMNDSGSTLGRREACEHGKGKKNSLAELKGSMSRAAGRKITRIISFSKKKALSEDLQTFSSEDEVPCCGYLNVLVNQGWKERWCRLRCNTLYFHKDRTDLHTHVNSIALRGCEVAPGFGPRHPFAFRILRNRQEVAILEASCSEDMGRWLGLLLVEMGSKVTPEALHYDYVDVETLTSIVSAGRNSFLYAQSCQDQWPEPRIYDEVPYEKVQDEEPQRPTGAQVKRHASSCSEKSHRADPQVKVKRHASSANQYKYGKNRAEEDARRYLVEKERLEKEKETIRTELTALRQEKKELKEAIRNNPGAKSKALEEAVATLEAQCRAKEEQRIDLELKLVAVKERLQQSLAGGPALGLSVSNKNKSQDTTNKPQSNAPEQSLPVNCVSELRKRSPSIVTSNQGRVLQKAKEWEMKKT.

The segment at leucine 83–histidine 145 is disordered. Residues serine 87, serine 93, serine 97, serine 103, and serine 153 each carry the phosphoserine modification. Residues serine 165–methionine 185 are compositionally biased toward polar residues. The disordered stretch occupies residues serine 165–glutamate 211. One can recognise a PH 1 domain in the interval aspartate 220–arginine 316. Residues serine 329 and serine 343 each carry the phosphoserine modification. Over residues lysine 340 to serine 349 the composition is skewed to basic and acidic residues. The interval lysine 340–leucine 382 is disordered. The span at aspartate 350 to threonine 362 shows a compositional bias: polar residues. Residues glutamate 418–glycine 512 enclose the PH 2 domain. Phosphotyrosine is present on tyrosine 557. Residues lysine 564 to lysine 609 form a disordered region. Residues glutamate 587–valine 596 show a composition bias toward basic and acidic residues. A coiled-coil region spans residues glycine 611–leucine 701. A disordered region spans residues proline 705–threonine 768. Residues serine 710–proline 734 are compositionally biased toward polar residues. Serine 747 carries the post-translational modification Phosphoserine. Positions lysine 759 to threonine 768 are enriched in basic and acidic residues.

In terms of assembly, interacts with CTTN.

The protein resides in the cytoplasm. Its subcellular location is the cell projection. The protein localises to the podosome. It is found in the invadopodium. It localises to the cytoskeleton. The protein resides in the stress fiber. Functionally, may be involved in podosome and invadosome formation. The polypeptide is Actin filament-associated protein 1-like 1 (Afap1l1) (Mus musculus (Mouse)).